Reading from the N-terminus, the 170-residue chain is Endoribonuclease YbeY (170 aa).

Zn(2+)-binding residues include His-118, His-122, and His-128.

The protein belongs to the endoribonuclease YbeY family. Requires Zn(2+) as cofactor.

The protein localises to the cytoplasm. Single strand-specific metallo-endoribonuclease involved in late-stage 70S ribosome quality control and in maturation of the 3' terminus of the 16S rRNA. This chain is Endoribonuclease YbeY, found in Mycobacteroides abscessus (strain ATCC 19977 / DSM 44196 / CCUG 20993 / CIP 104536 / JCM 13569 / NCTC 13031 / TMC 1543 / L948) (Mycobacterium abscessus).